A 142-amino-acid polypeptide reads, in one-letter code: Large ribosomal subunit protein uL13 (142 aa).

Belongs to the universal ribosomal protein uL13 family. In terms of assembly, part of the 50S ribosomal subunit.

Its function is as follows. This protein is one of the early assembly proteins of the 50S ribosomal subunit, although it is not seen to bind rRNA by itself. It is important during the early stages of 50S assembly. The chain is Large ribosomal subunit protein uL13 from Psychromonas ingrahamii (strain DSM 17664 / CCUG 51855 / 37).